A 98-amino-acid polypeptide reads, in one-letter code: NADH-ubiquinone oxidoreductase chain 4L (98 aa).

A run of 3 helical transmembrane segments spans residues 1–21 (MPSIYVNIFLAFIFALLGMLI), 29–49 (SLLCLEGMMLSLFILITLTAL), and 61–81 (IVLLVFAACEAAIGLALLVMV).

Belongs to the complex I subunit 4L family. In terms of assembly, core subunit of respiratory chain NADH dehydrogenase (Complex I) which is composed of 45 different subunits.

The protein resides in the mitochondrion inner membrane. The catalysed reaction is a ubiquinone + NADH + 5 H(+)(in) = a ubiquinol + NAD(+) + 4 H(+)(out). Functionally, core subunit of the mitochondrial membrane respiratory chain NADH dehydrogenase (Complex I) which catalyzes electron transfer from NADH through the respiratory chain, using ubiquinone as an electron acceptor. Part of the enzyme membrane arm which is embedded in the lipid bilayer and involved in proton translocation. This chain is NADH-ubiquinone oxidoreductase chain 4L (MT-ND4L), found in Lepus europaeus (European hare).